Reading from the N-terminus, the 99-residue chain is Integration host factor subunit alpha (99 aa).

This sequence belongs to the bacterial histone-like protein family. Heterodimer of an alpha and a beta chain.

This protein is one of the two subunits of integration host factor, a specific DNA-binding protein that functions in genetic recombination as well as in transcriptional and translational control. In Nitrosococcus oceani (strain ATCC 19707 / BCRC 17464 / JCM 30415 / NCIMB 11848 / C-107), this protein is Integration host factor subunit alpha.